The following is an 85-amino-acid chain: Keratin-associated protein 7-1 (85 aa).

The interval 37-82 (GSPLGYGCNGYSSLGYGFGGSSFSNLGCGYGGSFYRPWGSGSGFGY) is 12 X 2 AA repeats of G-[YCGS].

Belongs to the KRTAP type 7 family. Interacts with wool keratins. Wool.

In terms of biological role, in the wool cortex, wool keratin intermediate filaments are embedded in an interfilamentous matrix, consisting of hair keratin-associated proteins (KRTAP), which are essential for the formation of a rigid and resistant wool shaft through their extensive disulfide bond cross-linking with abundant cysteine residues of wool keratins. The matrix proteins include the high-sulfur and high-glycine-tyrosine keratins. This is Keratin-associated protein 7-1 (KRTAP7-1) from Ovis aries (Sheep).